The sequence spans 206 residues: Small ribosomal subunit protein eS1 (206 aa).

This sequence belongs to the eukaryotic ribosomal protein eS1 family.

This chain is Small ribosomal subunit protein eS1, found in Natronomonas pharaonis (strain ATCC 35678 / DSM 2160 / CIP 103997 / JCM 8858 / NBRC 14720 / NCIMB 2260 / Gabara) (Halobacterium pharaonis).